A 161-amino-acid chain; its full sequence is Disulfide bond formation protein B (161 aa).

Residues 1–8 are Cytoplasmic-facing; the sequence is MQANSRAY. A helical membrane pass occupies residues 9-25; that stretch reads FLLIAFISFGLVGFALY. The Periplasmic segment spans residues 26-43; it reads LQFEKGYQPCPLCIMQRF. The cysteines at positions 35 and 38 are disulfide-linked. The chain crosses the membrane as a helical span at residues 44–58; that stretch reads AFIGIGLFSLLAVIA. The Cytoplasmic segment spans residues 59 to 63; sequence QNTRS. The chain crosses the membrane as a helical span at residues 64 to 81; the sequence is LWQGLGMLSGVGGIAVAV. The Periplasmic segment spans residues 82 to 136; it reads YHVSLLLNPKASCGIDPLENWVNALPTAKVLPQVFYSDGLCTAPLPPVLGLSVPA. Cysteine 94 and cysteine 122 are oxidised to a cystine. The helical transmembrane segment at 137–155 threads the bilayer; the sequence is WSLIWLFILTLTLAVGLIR. The Cytoplasmic portion of the chain corresponds to 156-161; sequence REKNFR.

The protein belongs to the DsbB family.

It is found in the cell inner membrane. In terms of biological role, required for disulfide bond formation in some periplasmic proteins. Acts by oxidizing the DsbA protein. The protein is Disulfide bond formation protein B of Cupriavidus pinatubonensis (strain JMP 134 / LMG 1197) (Cupriavidus necator (strain JMP 134)).